The following is a 1450-amino-acid chain: ABC transporter G family member 37 (1450 aa).

The region spanning G158 to A431 is the ABC transporter 1 domain. Residue G191 to T198 coordinates ATP. The ABC transmembrane type-2 1 domain maps to E509–F721. The next 6 helical transmembrane spans lie at F527 to F547, G559 to A579, I614 to F634, L646 to G666, V670 to I690, and I756 to L776. One can recognise an ABC transporter 2 domain in the interval I852–D1104. G897 to T904 is an ATP binding site. The ABC transmembrane type-2 2 domain maps to T1177–F1391. 7 consecutive transmembrane segments (helical) span residues A1198 to L1218, Y1236 to V1256, L1284 to F1304, F1311 to M1331, I1341 to I1361, W1372 to G1392, and V1422 to I1442.

This sequence belongs to the ABC transporter superfamily. ABCG family. PDR (TC 3.A.1.205) subfamily.

The protein resides in the membrane. In terms of biological role, may be a general defense protein. The protein is ABC transporter G family member 37 of Oryza sativa subsp. japonica (Rice).